Consider the following 230-residue polypeptide: uncharacterized protein (230 aa).

The next 7 helical transmembrane spans lie at 34-54 (FFAGSLLLATIGALLGLMNFQ), 56-76 (VVQYKWVFFIAEIAAFFGLMF), 87-107 (MLFAFTSLSGVTLVPLLGMVI), 111-131 (GLGAIWQALGMTTIVFGLMSV), 146-166 (MLFIALIVVVVCSLINLFLGS), 167-187 (PMFQVVIAGASAILFSLYIAY), and 205-225 (VSLYLDFLNVFISILQIIGIF).

Belongs to the BI1 family.

It is found in the cell membrane. This is an uncharacterized protein from Helicobacter pylori (strain ATCC 700392 / 26695) (Campylobacter pylori).